The following is a 198-amino-acid chain: MYDYIKGQLTKITAKYIVVEANGLGYMITVANPYSFTDCVNQQVTIYLHQVIREDAQLLFGFHSEEEKDVFLKLISVSGIGPTTALAIVAVDDNRGLVNAIDNSDITYLMRFPKIGKKTAQQMVLDLAGKFVEAPKEESSKPPKAKQQGNEQLDEAVEALLALGYKATELKKIRAFFEGTSETAEQYIKSALKMLMKG.

The segment at 1-63 (MYDYIKGQLT…EDAQLLFGFH (63 aa)) is domain I. The segment at 64 to 142 (SEEEKDVFLK…EAPKEESSKP (79 aa)) is domain II. Residues 143 to 147 (PKAKQ) are flexible linker. The segment at 148-198 (QGNEQLDEAVEALLALGYKATELKKIRAFFEGTSETAEQYIKSALKMLMKG) is domain III.

The protein belongs to the RuvA family. As to quaternary structure, homotetramer. Forms an RuvA(8)-RuvB(12)-Holliday junction (HJ) complex. HJ DNA is sandwiched between 2 RuvA tetramers; dsDNA enters through RuvA and exits via RuvB. An RuvB hexamer assembles on each DNA strand where it exits the tetramer. Each RuvB hexamer is contacted by two RuvA subunits (via domain III) on 2 adjacent RuvB subunits; this complex drives branch migration. In the full resolvosome a probable DNA-RuvA(4)-RuvB(12)-RuvC(2) complex forms which resolves the HJ.

The protein localises to the cytoplasm. The RuvA-RuvB-RuvC complex processes Holliday junction (HJ) DNA during genetic recombination and DNA repair, while the RuvA-RuvB complex plays an important role in the rescue of blocked DNA replication forks via replication fork reversal (RFR). RuvA specifically binds to HJ cruciform DNA, conferring on it an open structure. The RuvB hexamer acts as an ATP-dependent pump, pulling dsDNA into and through the RuvAB complex. HJ branch migration allows RuvC to scan DNA until it finds its consensus sequence, where it cleaves and resolves the cruciform DNA. This is Holliday junction branch migration complex subunit RuvA from Streptococcus equi subsp. equi (strain 4047).